The following is a 227-amino-acid chain: UPF0173 metal-dependent hydrolase DR_0006 (227 aa).

The protein belongs to the UPF0173 family.

The polypeptide is UPF0173 metal-dependent hydrolase DR_0006 (Deinococcus radiodurans (strain ATCC 13939 / DSM 20539 / JCM 16871 / CCUG 27074 / LMG 4051 / NBRC 15346 / NCIMB 9279 / VKM B-1422 / R1)).